The following is a 61-amino-acid chain: Small ribosomal subunit protein uS14 (61 aa).

4 residues coordinate Zn(2+): C24, C27, C40, and C43.

The protein belongs to the universal ribosomal protein uS14 family. Zinc-binding uS14 subfamily. In terms of assembly, part of the 30S ribosomal subunit. Contacts proteins S3 and S10. Zn(2+) is required as a cofactor.

Functionally, binds 16S rRNA, required for the assembly of 30S particles and may also be responsible for determining the conformation of the 16S rRNA at the A site. This is Small ribosomal subunit protein uS14 from Desulfotalea psychrophila (strain LSv54 / DSM 12343).